An 881-amino-acid chain; its full sequence is Alanine--tRNA ligase (881 aa).

Positions 422-440 are enriched in basic and acidic residues; it reads FEDEMQKQKERARSARSTE. The tract at residues 422–445 is disordered; it reads FEDEMQKQKERARSARSTEKSMGV. Zn(2+) is bound by residues His567, His571, Cys669, and His673.

It belongs to the class-II aminoacyl-tRNA synthetase family. Zn(2+) is required as a cofactor.

The protein localises to the cytoplasm. It carries out the reaction tRNA(Ala) + L-alanine + ATP = L-alanyl-tRNA(Ala) + AMP + diphosphate. Its function is as follows. Catalyzes the attachment of alanine to tRNA(Ala) in a two-step reaction: alanine is first activated by ATP to form Ala-AMP and then transferred to the acceptor end of tRNA(Ala). Also edits incorrectly charged Ser-tRNA(Ala) and Gly-tRNA(Ala) via its editing domain. The protein is Alanine--tRNA ligase of Pediococcus pentosaceus (strain ATCC 25745 / CCUG 21536 / LMG 10740 / 183-1w).